The primary structure comprises 469 residues: Glutamate--tRNA ligase 2 (469 aa).

The 'HIGH' region signature appears at 10 to 20 (PSPTGFLHIGS). The 'KMSKS' region motif lies at 239–243 (KLSKR). Lys-242 provides a ligand contact to ATP.

It belongs to the class-I aminoacyl-tRNA synthetase family. Glutamate--tRNA ligase type 1 subfamily. In terms of assembly, monomer.

The protein localises to the cytoplasm. The enzyme catalyses tRNA(Glu) + L-glutamate + ATP = L-glutamyl-tRNA(Glu) + AMP + diphosphate. Functionally, catalyzes the attachment of glutamate to tRNA(Glu) in a two-step reaction: glutamate is first activated by ATP to form Glu-AMP and then transferred to the acceptor end of tRNA(Glu). This Rickettsia typhi (strain ATCC VR-144 / Wilmington) protein is Glutamate--tRNA ligase 2.